Consider the following 368-residue polypeptide: Homoserine O-acetyltransferase (368 aa).

Residues 43–354 (NVVVVCHALT…DYGHDAFLVE (312 aa)) form the AB hydrolase-1 domain. Ser148 functions as the Nucleophile in the catalytic mechanism. Arg220 is a binding site for substrate. Active-site residues include Asp314 and His348. Asp349 serves as a coordination point for substrate.

It belongs to the AB hydrolase superfamily. MetX family. Homodimer.

It localises to the cytoplasm. It carries out the reaction L-homoserine + acetyl-CoA = O-acetyl-L-homoserine + CoA. It functions in the pathway amino-acid biosynthesis; L-methionine biosynthesis via de novo pathway; O-acetyl-L-homoserine from L-homoserine: step 1/1. In terms of biological role, transfers an acetyl group from acetyl-CoA to L-homoserine, forming acetyl-L-homoserine. This chain is Homoserine O-acetyltransferase, found in Sulfurimonas autotrophica (strain ATCC BAA-671 / DSM 16294 / JCM 11897 / OK10).